Reading from the N-terminus, the 122-residue chain is Ribonuclease P protein component 1 (122 aa).

This sequence belongs to the eukaryotic/archaeal RNase P protein component 1 family. In terms of assembly, consists of a catalytic RNA component and at least 4-5 protein subunits.

Its subcellular location is the cytoplasm. The catalysed reaction is Endonucleolytic cleavage of RNA, removing 5'-extranucleotides from tRNA precursor.. Its function is as follows. Part of ribonuclease P, a protein complex that generates mature tRNA molecules by cleaving their 5'-ends. In Thermococcus sibiricus (strain DSM 12597 / MM 739), this protein is Ribonuclease P protein component 1.